The following is a 190-amino-acid chain: Ribosome hibernation promotion factor (190 aa).

A required for ribosome-binding region spans residues 101–190; that stretch reads RDRGDQEVFV…KYGLIQTSEQ (90 aa).

The protein belongs to the HPF/YfiA ribosome-associated protein family. Long HPF subfamily. In terms of assembly, interacts with 100S ribosomes during exponential growth, as 100S ribosomes decrease (after 28 hours) also found associated with 30s and 50S subunits.

It is found in the cytoplasm. In terms of biological role, required and sufficient for dimerization of active 70S ribosomes into 100S ribosomes. 110S ribosomes are probably translationally inactive and may serve as a reservoir of easily reactivated ribosomes when necessary in the cell. Also reduces the translation efficiency of a small number of genes. Unlike E.coli, 100S ribosomes are present during exponential growth and decrease during stationary phase. This strain produces 30% fewer 100S ribosomes than strain N315 and RN4200 under the same growth conditions. The sequence is that of Ribosome hibernation promotion factor from Staphylococcus aureus (strain USA300).